A 571-amino-acid chain; its full sequence is Urease subunit alpha (571 aa).

One can recognise a Urease domain in the interval 132-571 (GGIDSHIHFI…LPMAQRYFLF (440 aa)). Residues His-137, His-139, and Lys-220 each coordinate Ni(2+). Lys-220 is modified (N6-carboxylysine). Substrate is bound at residue His-222. Residues His-249 and His-275 each contribute to the Ni(2+) site. His-323 serves as the catalytic Proton donor. Residue Asp-363 coordinates Ni(2+).

This sequence belongs to the metallo-dependent hydrolases superfamily. Urease alpha subunit family. As to quaternary structure, heterotrimer of UreA (gamma), UreB (beta) and UreC (alpha) subunits. Three heterotrimers associate to form the active enzyme. The cofactor is Ni cation. Carboxylation allows a single lysine to coordinate two nickel ions.

It is found in the cytoplasm. It catalyses the reaction urea + 2 H2O + H(+) = hydrogencarbonate + 2 NH4(+). It participates in nitrogen metabolism; urea degradation; CO(2) and NH(3) from urea (urease route): step 1/1. This chain is Urease subunit alpha, found in Kocuria rhizophila (strain ATCC 9341 / DSM 348 / NBRC 103217 / DC2201).